The sequence spans 146 residues: Transcriptional regulator MraZ (146 aa).

SpoVT-AbrB domains lie at 5–52 (SAAL…PRAE) and 81–124 (AAEI…KEES).

This sequence belongs to the MraZ family. In terms of assembly, forms oligomers.

It is found in the cytoplasm. The protein resides in the nucleoid. In Alcanivorax borkumensis (strain ATCC 700651 / DSM 11573 / NCIMB 13689 / SK2), this protein is Transcriptional regulator MraZ.